Here is a 414-residue protein sequence, read N- to C-terminus: MTRFDTIERAVADIAAGKAVVVVDDEDRENEGDLIFAAEKATPELVAFMIRYTSGYICVPLTGEDCDRLGLPPMYATNQDKHGTAYTVSVDAREGITTGISAADRATTMRLLADADAKADDLTRPGHVVPLRAKDGGVLRRPGHTEAAVDLARMAGLRPAGVICEIVSQKDEGHMARTEELRVFADDHDLALISIADMIAWRRKHEKQVVRVAEARIPTAHGAFTAVGYQSIYDDVEHVALVRGDIGDGEDVLVRVHSECLTGDVFGSLRCDCGPQLDAALEMVDQEGRGVVLYMRGHEGRGIGLMHKLQAYQLQDSGRDTVDANLDLGLPADARDYGTGAQILVDLGIRSMRLLTNNPAKRVGLDGYGLTITERVPMPLRANAENLRYLRTKRDRMGHDLVGLDDLDLGETAQ.

Residues M1 to K204 are DHBP synthase. D-ribulose 5-phosphate is bound by residues R28–E29, D33, R141–T145, and E165. E29 serves as a coordination point for Mg(2+). H144 is a Mg(2+) binding site. Residues H205–Q414 form a GTP cyclohydrolase II region. R255 to E259 serves as a coordination point for GTP. Residues C260, C271, and C273 each coordinate Zn(2+). GTP contacts are provided by residues Q276, E299 to R301, and T321. The active-site Proton acceptor; for GTP cyclohydrolase activity is the D333. Residue R335 is the Nucleophile; for GTP cyclohydrolase activity of the active site. 2 residues coordinate GTP: T356 and K361.

It in the N-terminal section; belongs to the DHBP synthase family. In the C-terminal section; belongs to the GTP cyclohydrolase II family. Mg(2+) serves as cofactor. It depends on Mn(2+) as a cofactor. The cofactor is Zn(2+).

It carries out the reaction D-ribulose 5-phosphate = (2S)-2-hydroxy-3-oxobutyl phosphate + formate + H(+). It catalyses the reaction GTP + 4 H2O = 2,5-diamino-6-hydroxy-4-(5-phosphoribosylamino)-pyrimidine + formate + 2 phosphate + 3 H(+). The protein operates within cofactor biosynthesis; riboflavin biosynthesis; 2-hydroxy-3-oxobutyl phosphate from D-ribulose 5-phosphate: step 1/1. Its pathway is cofactor biosynthesis; riboflavin biosynthesis; 5-amino-6-(D-ribitylamino)uracil from GTP: step 1/4. Its function is as follows. Catalyzes the conversion of D-ribulose 5-phosphate to formate and 3,4-dihydroxy-2-butanone 4-phosphate. Catalyzes the conversion of GTP to 2,5-diamino-6-ribosylamino-4(3H)-pyrimidinone 5'-phosphate (DARP), formate and pyrophosphate. The protein is Riboflavin biosynthesis protein RibBA of Nocardia farcinica (strain IFM 10152).